The sequence spans 490 residues: Fumitremorgin C monooxygenase (490 aa).

Residues 12-32 (LGVVGASLIVILGIILLFPLG) traverse the membrane as a helical segment. Residue C442 coordinates heme.

It belongs to the cytochrome P450 family. The cofactor is heme.

It is found in the membrane. It carries out the reaction fumitremorgin C + 2 reduced [NADPH--hemoprotein reductase] + 2 O2 = 12alpha,13alpha-dihydroxyfumitremorgin C + 2 oxidized [NADPH--hemoprotein reductase] + 2 H2O + 2 H(+). It functions in the pathway mycotoxin biosynthesis. Its function is as follows. Cytochrome P450 monooxygenase; part of the gene cluster that mediates the biosynthesis of fumitremorgins, indole alkaloids that carry not only intriguing chemical structures, but also interesting biological and pharmacological activities. The biosynthesis of fumitremorgin-type alkaloids begins by condensation of the two amino acids L-tryptophan and L-proline to brevianamide F, catalyzed by the non-ribosomal peptide synthetase ftmA. Brevianamide F is then prenylated by the prenyltransferase ftmPT1/ftmB in the presence of dimethylallyl diphosphate, resulting in the formation of tryprostatin B. The three cytochrome P450 monooxygenases, ftmP450-1/ftmC, ftmP450-2/ftmE and ftmP450-3/FtmG, are responsible for the conversion of tryprostatin B to 6-hydroxytryprostatin B, tryprostatin A to fumitremorgin C and fumitremorgin C to 12,13-dihydroxyfumitremorgin C, respectively. The putative methyltransferase ftmMT/ftmD is expected for the conversion of 6-hydroxytryprostatin B to tryprostatin A. FtmPT2/FtmH catalyzes the prenylation of 12,13-dihydroxyfumitre-morgin C in the presence of dimethylallyl diphosphate, resulting in the formation of fumitremorgin B. Fumitremorgin B is further converted to verruculogen by ftmOx1/ftmF via the insertion of an endoperoxide bond between the two prenyl moieties. In some fungal species, verruculogen is further converted to fumitremorgin A, but the enzymes involved in this step have not been identified yet. In Aspergillus fumigatus (strain ATCC MYA-4609 / CBS 101355 / FGSC A1100 / Af293) (Neosartorya fumigata), this protein is Fumitremorgin C monooxygenase.